A 143-amino-acid chain; its full sequence is Large ribosomal subunit protein uL15 (143 aa).

Composition is skewed to basic residues over residues 1–14 and 23–38; these read MIRKSKKITKKRGS and KKHRGAGHRGGRGNAG. The interval 1–38 is disordered; that stretch reads MIRKSKKITKKRGSRTCGYGEAKKHRGAGHRGGRGNAG.

This sequence belongs to the universal ribosomal protein uL15 family. In terms of assembly, part of the 50S ribosomal subunit.

In terms of biological role, binds to the 23S rRNA. This is Large ribosomal subunit protein uL15 from Methanococcus maripaludis (strain DSM 14266 / JCM 13030 / NBRC 101832 / S2 / LL).